Here is a 335-residue protein sequence, read N- to C-terminus: Glycerol-3-phosphate dehydrogenase [NAD(P)+] (335 aa).

Residues Ser10, Phe11, Arg31, and Lys105 each contribute to the NADPH site. Sn-glycerol 3-phosphate is bound by residues Lys105, Gly136, and Ser138. Residue Ala140 coordinates NADPH. 5 residues coordinate sn-glycerol 3-phosphate: Lys191, Asp244, Ser254, Arg255, and Asn256. Lys191 functions as the Proton acceptor in the catalytic mechanism. Arg255 is a binding site for NADPH. 2 residues coordinate NADPH: Val279 and Glu281.

This sequence belongs to the NAD-dependent glycerol-3-phosphate dehydrogenase family.

The protein localises to the cytoplasm. The catalysed reaction is sn-glycerol 3-phosphate + NAD(+) = dihydroxyacetone phosphate + NADH + H(+). The enzyme catalyses sn-glycerol 3-phosphate + NADP(+) = dihydroxyacetone phosphate + NADPH + H(+). It participates in membrane lipid metabolism; glycerophospholipid metabolism. Catalyzes the reduction of the glycolytic intermediate dihydroxyacetone phosphate (DHAP) to sn-glycerol 3-phosphate (G3P), the key precursor for phospholipid synthesis. The sequence is that of Glycerol-3-phosphate dehydrogenase [NAD(P)+] from Leptospira borgpetersenii serovar Hardjo-bovis (strain L550).